The chain runs to 421 residues: UPF0415 protein C7orf25 homolog (421 aa).

It belongs to the UPF0415 family.

The chain is UPF0415 protein C7orf25 homolog from Rattus norvegicus (Rat).